A 141-amino-acid chain; its full sequence is Putative pre-16S rRNA nuclease (141 aa).

Belongs to the YqgF nuclease family.

It is found in the cytoplasm. Functionally, could be a nuclease involved in processing of the 5'-end of pre-16S rRNA. The protein is Putative pre-16S rRNA nuclease of Acetivibrio thermocellus (strain ATCC 27405 / DSM 1237 / JCM 9322 / NBRC 103400 / NCIMB 10682 / NRRL B-4536 / VPI 7372) (Clostridium thermocellum).